The following is a 331-amino-acid chain: Thiamine thiazole synthase (331 aa).

Residues S82, 103–104, G111, and V176 contribute to the substrate site; that span reads EA. Position 210 is a 2,3-didehydroalanine (Cys) (C210). Residues D212, H242, M296, and 306–308 contribute to the substrate site; that span reads RMG.

Belongs to the THI4 family. As to quaternary structure, homooctamer. It depends on Fe cation as a cofactor. In terms of processing, during the catalytic reaction, a sulfide is transferred from Cys-210 to a reaction intermediate, generating a dehydroalanine residue.

The protein localises to the cytoplasm. It localises to the nucleus. It catalyses the reaction [ADP-thiazole synthase]-L-cysteine + glycine + NAD(+) = [ADP-thiazole synthase]-dehydroalanine + ADP-5-ethyl-4-methylthiazole-2-carboxylate + nicotinamide + 3 H2O + 2 H(+). Functionally, involved in biosynthesis of the thiamine precursor thiazole. Catalyzes the conversion of NAD and glycine to adenosine diphosphate 5-(2-hydroxyethyl)-4-methylthiazole-2-carboxylic acid (ADT), an adenylated thiazole intermediate. The reaction includes an iron-dependent sulfide transfer from a conserved cysteine residue of the protein to a thiazole intermediate. The enzyme can only undergo a single turnover, which suggests it is a suicide enzyme. May have additional roles in adaptation to various stress conditions and in DNA damage tolerance. The polypeptide is Thiamine thiazole synthase (Eremothecium gossypii (strain ATCC 10895 / CBS 109.51 / FGSC 9923 / NRRL Y-1056) (Yeast)).